A 419-amino-acid chain; its full sequence is Pregnancy-specific beta-1-glycoprotein 4 (419 aa).

Positions 1–34 are cleaved as a signal peptide; sequence MGPLSAPPCTQRITWKGVLLTASLLNFWNPPTTA. Residues 35–144 form the Ig-like V-type domain; it reads QVTIEAQPPK…TGHFTFTLHL (110 aa). N-linked (GlcNAc...) asparagine glycans are attached at residues N104, N111, N199, N268, N299, and N303. 3 consecutive Ig-like C2-type domains span residues 147–234, 237–327, and 332–410; these read PKPS…VTLN, PKLS…VTLN, and PDLP…KSIT. 3 disulfides stabilise this stretch: C169–C217, C262–C310, and C354–C394.

It belongs to the immunoglobulin superfamily. CEA family.

The protein resides in the secreted. This chain is Pregnancy-specific beta-1-glycoprotein 4 (PSG4), found in Homo sapiens (Human).